A 950-amino-acid chain; its full sequence is Glycine dehydrogenase (decarboxylating) (950 aa).

Lys-698 carries the post-translational modification N6-(pyridoxal phosphate)lysine.

This sequence belongs to the GcvP family. As to quaternary structure, the glycine cleavage system is composed of four proteins: P, T, L and H. The cofactor is pyridoxal 5'-phosphate.

It carries out the reaction N(6)-[(R)-lipoyl]-L-lysyl-[glycine-cleavage complex H protein] + glycine + H(+) = N(6)-[(R)-S(8)-aminomethyldihydrolipoyl]-L-lysyl-[glycine-cleavage complex H protein] + CO2. The glycine cleavage system catalyzes the degradation of glycine. The P protein binds the alpha-amino group of glycine through its pyridoxal phosphate cofactor; CO(2) is released and the remaining methylamine moiety is then transferred to the lipoamide cofactor of the H protein. The sequence is that of Glycine dehydrogenase (decarboxylating) from Neisseria meningitidis serogroup A / serotype 4A (strain DSM 15465 / Z2491).